The sequence spans 254 residues: 3-deoxy-manno-octulosonate cytidylyltransferase (254 aa).

This sequence belongs to the KdsB family.

The protein localises to the cytoplasm. It catalyses the reaction 3-deoxy-alpha-D-manno-oct-2-ulosonate + CTP = CMP-3-deoxy-beta-D-manno-octulosonate + diphosphate. It participates in nucleotide-sugar biosynthesis; CMP-3-deoxy-D-manno-octulosonate biosynthesis; CMP-3-deoxy-D-manno-octulosonate from 3-deoxy-D-manno-octulosonate and CTP: step 1/1. The protein operates within bacterial outer membrane biogenesis; lipopolysaccharide biosynthesis. In terms of biological role, activates KDO (a required 8-carbon sugar) for incorporation into bacterial lipopolysaccharide in Gram-negative bacteria. This is 3-deoxy-manno-octulosonate cytidylyltransferase from Bordetella petrii (strain ATCC BAA-461 / DSM 12804 / CCUG 43448).